The chain runs to 51 residues: Mitochondrial import receptor subunit TOM5 homolog (51 aa).

Position 1 is an N-acetylmethionine (Met1). Residue Lys10 forms a Glycyl lysine isopeptide (Lys-Gly) (interchain with G-Cter in SUMO2) linkage. The chain crosses the membrane as a helical span at residues 27-45 (SIRNFLIYVALLRVTPFIL).

This sequence belongs to the Tom5 family. In terms of assembly, forms part of the preprotein translocase complex of the outer mitochondrial membrane (TOM complex) which consists of at least 7 different proteins (TOMM5, TOMM6, TOMM7, TOMM20, TOMM22, TOMM40 and TOMM70).

It is found in the mitochondrion outer membrane. The sequence is that of Mitochondrial import receptor subunit TOM5 homolog from Bos taurus (Bovine).